Reading from the N-terminus, the 333-residue chain is SPbeta prophage-derived recombinase-like protein YomM (333 aa).

A Core-binding (CB) domain is found at 30–113; that stretch reads EEHRNLVQEF…GVSSLNNYIE (84 aa). The 191-residue stretch at 142-332 folds into the Tyr recombinase domain; the sequence is YEKVKVTYDD…DFEEEKNQIF (191 aa). Active-site residues include Arg180, Lys211, His281, and His308. The O-(3'-phospho-DNA)-tyrosine intermediate role is filled by Tyr319.

This sequence belongs to the 'phage' integrase family.

The protein is SPbeta prophage-derived recombinase-like protein YomM (yomM) of Bacillus subtilis (strain 168).